The primary structure comprises 188 residues: Putative manganese efflux pump MntP (188 aa).

The next 6 helical transmembrane spans lie at 1 to 21 (MLIQILLIGVSVSMDTFAVSI), 40 to 60 (LWFGGFQALFPLLGYFAASTF), 64 to 84 (VTAVDHWIIFGLLALIGGNMV), 105 to 127 (HMLPLAVACSIDAVAVGVSFAFM), 131 to 153 (IWLSVVIIGITTGLFSAAGLYIG), and 166 to 186 (IAGGVVLILIGLKVLFEHLGF).

This sequence belongs to the MntP (TC 9.B.29) family.

The protein resides in the cell membrane. In terms of biological role, probably functions as a manganese efflux pump. This chain is Putative manganese efflux pump MntP, found in Bifidobacterium adolescentis (strain ATCC 15703 / DSM 20083 / NCTC 11814 / E194a).